The primary structure comprises 452 residues: Photoreceptor ankyrin repeat protein (452 aa).

ANK repeat units follow at residues 94 to 123, 130 to 160, 164 to 193, and 223 to 257; these read CRLGALYWACVHNDPTQLQAILDGGVSPEE, NGRTGLMVACYHGFQSVVALLSHCPFLDVNQ, GGDTALMLAAQAGHVPLVSLLLNYYVGLDL, and RGKTALEWAVLTDSFDTVWRIRQLLRRPQVEQLSQ. 2 disordered regions span residues 335–369 and 405–427; these read LGTRSKSVPELLGTAPPPPLVPQSPPGSPQRSPWV and SKASSSSHQCQPKPSPSGHQSLA. Positions 349-362 are enriched in pro residues; sequence APPPPLVPQSPPGS. The span at 406 to 424 shows a compositional bias: polar residues; it reads KASSSSHQCQPKPSPSGHQ.

Its subcellular location is the cytoplasm. It localises to the cytosol. The protein resides in the nucleus. Functionally, acts as a transcriptional repressor for CRX-activated photoreceptor gene regulation. The protein is Photoreceptor ankyrin repeat protein of Homo sapiens (Human).